We begin with the raw amino-acid sequence, 135 residues long: C-type lectin PAL (135 aa).

4 disulfide bridges follow: Cys-3/Cys-14, Cys-31/Cys-131, Cys-38/Cys-133, and Cys-106/Cys-123. The region spanning 10–132 is the C-type lectin domain; the sequence is MNGLCYKIFD…CGSKNAFLCQ (123 aa). Ca(2+)-binding residues include Gln-96, Asp-98, Glu-104, Asn-119, and Asp-120. The short motif at 96 to 98 is the Galactose-binding element; sequence QPD.

It belongs to the true venom lectin family. As to quaternary structure, homodimer; disulfide-linked. As to expression, expressed by the venom gland.

It is found in the secreted. Its function is as follows. Galactose-binding lectin which recognizes specific carbohydrate structures and agglutinates a variety of animal cells by binding to cell-surface glycoproteins and glycolipids. This is a calcium-dependent lectin. Shows high hemagglutinating activity (MHC is 0.25 ug/ml on rabbit erythrocytes). The protein is C-type lectin PAL of Bitis arietans (African puff adder).